The chain runs to 33 residues: Brevinin-2CDYb (33 aa).

An intrachain disulfide couples C27 to C33.

The protein belongs to the frog skin active peptide (FSAP) family. Brevinin subfamily. Expressed by the skin glands.

The protein resides in the secreted. Its function is as follows. Antimicrobial peptide. This is Brevinin-2CDYb from Rana dybowskii (Dybovsky's frog).